The sequence spans 229 residues: Movement and silencing protein TGBp1 (229 aa).

The (+)RNA virus helicase ATP-binding domain occupies 1-114; it reads MVEFTKRLLL…PAAQVPHFVK (114 aa). The (+)RNA virus helicase C-terminal domain maps to 115-229; it reads LFSHRCGLNS…MSFDAADTSA (115 aa).

It belongs to the Tymovirales TGBp1 protein family. As to quaternary structure, homodimer and homooligomer. Interacts with capsid protein. Interacts with host AGO1; this interaction targets the host protein for degradation, thereby suppressing the antiviral RNA silencing.

Its subcellular location is the host cytoplasm. Its function is as follows. Transports viral genome to neighboring plant cells directly through plasmosdesmata, without any budding. The movement protein allows efficient cell to cell propagation, by bypassing the host cell wall barrier. Increases plasmodesma size exclusion limit. Acts as a suppressor of RNA-mediated gene silencing, also known as post-transcriptional gene silencing (PTGS), a mechanism of plant viral defense that limits the accumulation of viral RNAs. The protein is Movement and silencing protein TGBp1 of Strawberry mild yellow edge-associated virus (SMYEaV).